The chain runs to 671 residues: DNA ligase (671 aa).

NAD(+) is bound by residues 32–36 (DAEYD), 81–82 (SL), and glutamate 113. Lysine 115 (N6-AMP-lysine intermediate) is an active-site residue. Residues arginine 136, glutamate 173, lysine 290, and lysine 314 each coordinate NAD(+). 4 residues coordinate Zn(2+): cysteine 408, cysteine 411, cysteine 426, and cysteine 432. The 79-residue stretch at 593–671 (EIDSPFAGKT…EAEMIRLLGA (79 aa)) folds into the BRCT domain.

Belongs to the NAD-dependent DNA ligase family. LigA subfamily. The cofactor is Mg(2+). Requires Mn(2+) as cofactor.

The catalysed reaction is NAD(+) + (deoxyribonucleotide)n-3'-hydroxyl + 5'-phospho-(deoxyribonucleotide)m = (deoxyribonucleotide)n+m + AMP + beta-nicotinamide D-nucleotide.. Functionally, DNA ligase that catalyzes the formation of phosphodiester linkages between 5'-phosphoryl and 3'-hydroxyl groups in double-stranded DNA using NAD as a coenzyme and as the energy source for the reaction. It is essential for DNA replication and repair of damaged DNA. This Salmonella newport (strain SL254) protein is DNA ligase.